A 333-amino-acid polypeptide reads, in one-letter code: Large ribosomal subunit protein mL39 (333 aa).

The 67-residue stretch at 56–122 (DKIEVRYLGL…QESCTLQLLN (67 aa)) folds into the TGS domain. Residues 311–333 (SKKPSPARLPNEPFEEQQQLQLS) are disordered.

It belongs to the mitochondrion-specific ribosomal protein mL39 family. As to quaternary structure, component of the mitochondrial ribosome large subunit (39S) which comprises a 16S rRNA and about 50 distinct proteins.

Its subcellular location is the mitochondrion. This chain is Large ribosomal subunit protein mL39 (mRpL39), found in Drosophila melanogaster (Fruit fly).